We begin with the raw amino-acid sequence, 400 residues long: uncharacterized protein (400 aa).

The first 31 residues, 1–31 (MENPIKPVATRSIGIAVVLLVVGIVIGFAVG), serve as a signal peptide directing secretion.

The protein belongs to the bacterial solute-binding protein 1 family. WtpA subfamily.

This is an uncharacterized protein from Thermoplasma acidophilum (strain ATCC 25905 / DSM 1728 / JCM 9062 / NBRC 15155 / AMRC-C165).